Reading from the N-terminus, the 425-residue chain is Elongation factor 1-alpha (425 aa).

The tr-type G domain occupies 5–221; that stretch reads KPHMNLAVIG…DLFKMPDMPT (217 aa). The interval 14–21 is G1; the sequence is GHIDHGKS. 14-21 contacts GTP; it reads GHIDHGKS. Ser-21 lines the Mg(2+) pocket. The tract at residues 70–74 is G2; it reads GITID. A G3 region spans residues 91 to 94; sequence DCPG. GTP contacts are provided by residues 91–95 and 146–149; these read DCPGH and NKMD. The interval 146 to 149 is G4; it reads NKMD. Positions 185 to 187 are G5; the sequence is SAF.

This sequence belongs to the TRAFAC class translation factor GTPase superfamily. Classic translation factor GTPase family. EF-Tu/EF-1A subfamily.

It is found in the cytoplasm. It catalyses the reaction GTP + H2O = GDP + phosphate + H(+). In terms of biological role, GTP hydrolase that promotes the GTP-dependent binding of aminoacyl-tRNA to the A-site of ribosomes during protein biosynthesis. In Methanocorpusculum labreanum (strain ATCC 43576 / DSM 4855 / Z), this protein is Elongation factor 1-alpha.